A 142-amino-acid polypeptide reads, in one-letter code: ATP synthase epsilon chain (142 aa).

The protein belongs to the ATPase epsilon chain family. As to quaternary structure, F-type ATPases have 2 components, CF(1) - the catalytic core - and CF(0) - the membrane proton channel. CF(1) has five subunits: alpha(3), beta(3), gamma(1), delta(1), epsilon(1). CF(0) has three main subunits: a, b and c.

It localises to the cell inner membrane. Produces ATP from ADP in the presence of a proton gradient across the membrane. The sequence is that of ATP synthase epsilon chain from Shewanella loihica (strain ATCC BAA-1088 / PV-4).